A 286-amino-acid chain; its full sequence is MPSLKDLKNRIGSVKNTRKITKAMQMVAAAKLRRAQDSAEAARPYAERMGAVIASLASGQGAGAPRLLAGNGRDQIHLLVVMTSERGLCGGFNSTIVRLARQRANELVAQGKTVKILTVGKKGREQLKRDWASAFVGHVDLSDVRRLGYSNAQGIAREVLAAFEAGEADVVTIFYNRFQSVISQVPTAQQVIPAKFEAAETNALYDYEPSEEAILADLLPRGVATQIFTALLENAASEQGARMSAMDNATRNAGDMINKLTIQYNRSRQAAITKELIEIISGAEAL.

It belongs to the ATPase gamma chain family. As to quaternary structure, F-type ATPases have 2 components, CF(1) - the catalytic core - and CF(0) - the membrane proton channel. CF(1) has five subunits: alpha(3), beta(3), gamma(1), delta(1), epsilon(1). CF(0) has three main subunits: a, b and c.

Its subcellular location is the cell inner membrane. Its function is as follows. Produces ATP from ADP in the presence of a proton gradient across the membrane. The gamma chain is believed to be important in regulating ATPase activity and the flow of protons through the CF(0) complex. This is ATP synthase gamma chain from Fuscovulum blasticum (Rhodobacter blasticus).